The following is a 327-amino-acid chain: Phenylalanine--tRNA ligase alpha subunit (327 aa).

Residue E252 coordinates Mg(2+).

This sequence belongs to the class-II aminoacyl-tRNA synthetase family. Phe-tRNA synthetase alpha subunit type 1 subfamily. Tetramer of two alpha and two beta subunits. Mg(2+) serves as cofactor.

The protein resides in the cytoplasm. It carries out the reaction tRNA(Phe) + L-phenylalanine + ATP = L-phenylalanyl-tRNA(Phe) + AMP + diphosphate + H(+). The protein is Phenylalanine--tRNA ligase alpha subunit of Salmonella agona (strain SL483).